The following is a 296-amino-acid chain: Large ribosomal subunit protein uL18B (296 aa).

A disordered region spans residues 251-296 (PVHEKKPKKEVKKKRWNRAKLSLEQKKDRVAQKKASFLRAQEKADS). Positions 255–268 (KKPKKEVKKKRWNR) are enriched in basic residues. Over residues 271–281 (LSLEQKKDRVA) the composition is skewed to basic and acidic residues.

The protein belongs to the universal ribosomal protein uL18 family. As to quaternary structure, component of the large ribosomal subunit (LSU). Part of a LSU subcomplex, the 5S RNP which is composed of the 5S RNA, RPL5 and RPL11.

Its subcellular location is the cytoplasm. The protein resides in the nucleus. It is found in the nucleolus. Functionally, component of the ribosome, a large ribonucleoprotein complex responsible for the synthesis of proteins in the cell. The small ribosomal subunit (SSU) binds messenger RNAs (mRNAs) and translates the encoded message by selecting cognate aminoacyl-transfer RNA (tRNA) molecules. The large subunit (LSU) contains the ribosomal catalytic site termed the peptidyl transferase center (PTC), which catalyzes the formation of peptide bonds, thereby polymerizing the amino acids delivered by tRNAs into a polypeptide chain. The nascent polypeptides leave the ribosome through a tunnel in the LSU and interact with protein factors that function in enzymatic processing, targeting, and the membrane insertion of nascent chains at the exit of the ribosomal tunnel. As part of the 5S RNP/5S ribonucleoprotein particle it is an essential component of the LSU, required for its formation and the maturation of rRNAs. It also couples ribosome biogenesis to p53/TP53 activation. As part of the 5S RNP it accumulates in the nucleoplasm and inhibits MDM2, when ribosome biogenesis is perturbed, mediating the stabilization and the activation of TP53. The polypeptide is Large ribosomal subunit protein uL18B (rpl5-b) (Xenopus laevis (African clawed frog)).